Here is a 212-residue protein sequence, read N- to C-terminus: Nitrile hydratase subunit beta (212 aa).

It belongs to the nitrile hydratase subunit beta family. As to quaternary structure, heterodimer of an alpha and a beta chain.

It carries out the reaction an aliphatic primary amide = an aliphatic nitrile + H2O. Functionally, NHase catalyzes the hydration of various nitrile compounds to the corresponding amides. In Rhodococcus erythropolis (Arthrobacter picolinophilus), this protein is Nitrile hydratase subunit beta (nthB).